The chain runs to 42 residues: Cytochrome b559 subunit beta (42 aa).

A helical membrane pass occupies residues 17–33 (WLAIHGLAVPTVFFLGA). A heme-binding site is contributed by histidine 21.

Belongs to the PsbE/PsbF family. Heterodimer of an alpha subunit and a beta subunit. PSII is composed of 1 copy each of membrane proteins PsbA, PsbB, PsbC, PsbD, PsbE, PsbF, PsbH, PsbI, PsbJ, PsbK, PsbL, PsbM, PsbT, PsbX, PsbY, PsbZ, Psb30/Ycf12, at least 3 peripheral proteins of the oxygen-evolving complex and a large number of cofactors. It forms dimeric complexes. Heme b serves as cofactor.

The protein localises to the plastid. Its subcellular location is the chloroplast thylakoid membrane. This b-type cytochrome is tightly associated with the reaction center of photosystem II (PSII). PSII is a light-driven water:plastoquinone oxidoreductase that uses light energy to abstract electrons from H(2)O, generating O(2) and a proton gradient subsequently used for ATP formation. It consists of a core antenna complex that captures photons, and an electron transfer chain that converts photonic excitation into a charge separation. This is Cytochrome b559 subunit beta from Guillardia theta (Cryptophyte).